The primary structure comprises 87 residues: Small ribosomal subunit protein uS17 (87 aa).

Belongs to the universal ribosomal protein uS17 family. In terms of assembly, part of the 30S ribosomal subunit.

Its function is as follows. One of the primary rRNA binding proteins, it binds specifically to the 5'-end of 16S ribosomal RNA. The polypeptide is Small ribosomal subunit protein uS17 (Heliobacterium modesticaldum (strain ATCC 51547 / Ice1)).